The sequence spans 202 residues: Peptide deformylase (202 aa).

Fe cation-binding residues include Cys-121 and His-163. The active site involves Glu-164. Residue His-167 participates in Fe cation binding.

Belongs to the polypeptide deformylase family. It depends on Fe(2+) as a cofactor.

It carries out the reaction N-terminal N-formyl-L-methionyl-[peptide] + H2O = N-terminal L-methionyl-[peptide] + formate. Removes the formyl group from the N-terminal Met of newly synthesized proteins. Requires at least a dipeptide for an efficient rate of reaction. N-terminal L-methionine is a prerequisite for activity but the enzyme has broad specificity at other positions. The chain is Peptide deformylase from Synechococcus sp. (strain CC9311).